The following is a 1347-amino-acid chain: Probable serine/threonine-protein kinase DDB_G0288147 (1347 aa).

The Phorbol-ester/DAG-type zinc finger occupies 12–67 (NHRFEPYTLKHLTICKRCEKEIIGVSNSAQICYSCKNIYHTRCCKEIETKKLELIC). Disordered regions lie at residues 262 to 316 (PFNE…LNES), 333 to 402 (SNNS…KSSK), and 463 to 485 (DNNN…NNNN). Residues 271 to 282 (DSTLSASTYNRR) show a composition bias toward polar residues. Composition is skewed to low complexity over residues 286 to 316 (KNKN…LNES), 333 to 342 (SNNSNNLAAL), and 350 to 361 (TTTTTTTTTTTT). Composition is skewed to basic residues over residues 366 to 382 (NNHH…KSRK) and 389 to 402 (NKKK…KSSK). Low complexity predominate over residues 464-485 (NNNNNNNNNNNNNNNSNNNNNN). The Protein kinase domain maps to 599–854 (VKINVEIYDS…EILKVFYSLL (256 aa)). Residues 605–613 (IYDSPLCTV) and lysine 626 contribute to the ATP site. Aspartate 724 (proton acceptor) is an active-site residue. 2 disordered regions span residues 937–1241 (SERK…IVNP) and 1282–1310 (SSDS…IRSP). Positions 976–986 (IIDDDDDDDDD) are enriched in acidic residues. Composition is skewed to low complexity over residues 1004–1015 (NINSENKNNNNV) and 1024–1062 (SSNS…NNNN). 2 stretches are compositionally biased toward polar residues: residues 1063–1083 (LRQN…NQLM) and 1118–1127 (LSSSQTSEIG). 2 stretches are compositionally biased toward low complexity: residues 1128–1241 (DNNT…IVNP) and 1282–1291 (SSDSSNSLSD).

It belongs to the protein kinase superfamily. TKL Ser/Thr protein kinase family.

It carries out the reaction L-seryl-[protein] + ATP = O-phospho-L-seryl-[protein] + ADP + H(+). The catalysed reaction is L-threonyl-[protein] + ATP = O-phospho-L-threonyl-[protein] + ADP + H(+). The chain is Probable serine/threonine-protein kinase DDB_G0288147 from Dictyostelium discoideum (Social amoeba).